The chain runs to 436 residues: Eukaryotic translation initiation factor 4B (436 aa).

The segment at 56–98 (AKNNSNNTRSGGFGGSFGGRSRLDPALGGGSSDRREEYPVPDA) is disordered. Residues serine 65 and serine 71 each carry the phosphoserine modification. An RRM domain is found at 101–183 (YRAVINNIPW…RTVYVSVAAP (83 aa)). Residues 185–406 (RGGGADVDWS…EKQNGDAKEN (222 aa)) form a disordered region. The stretch at 190–210 (DVDWSSARGSNFQGDGREDAP) is one 1; approximate repeat. Positions 190-350 (DVDWSSARGS…DWGAARGAQF (161 aa)) are 7 X approximate tandem repeats. 5 consecutive repeat copies span residues 211 to 232 (DLDW…REEV), 233 to 258 (DIDW…REEV), 259 to 284 (DIDW…REEP), 285 to 310 (DIDW…REEP), and 311 to 340 (DIDW…EPAL). The segment covering 329–338 (PRREREKEEP) has biased composition (basic and acidic residues). One copy of the 7; truncated repeat lies at 341 to 350 (DWGAARGAQF). Composition is skewed to basic and acidic residues over residues 359–376 (TYKD…EQPK) and 397–406 (EKQNGDAKEN).

Involved in translation initiation. May be the homolog of mammalian eIF4B and be part of an RNA helicase. STM1/TIF3 is a non-essential gene. The sequence is that of Eukaryotic translation initiation factor 4B (TIF3) from Saccharomyces cerevisiae (strain ATCC 204508 / S288c) (Baker's yeast).